Consider the following 488-residue polypeptide: MVEQAQGSLEEIERQFLDVAQRDGLESLQEDVKPDVKSDLNGNGEEKRDRDDEDRKKRKRSRSRDRGDRDRKRSRSRDRRDRDRSRSRERRRDRSRDRNRDDRRGGRDDDRRREPQEPAKPREPKKYRFWDVPPTGFENITPMEYKNMQASGAVPRGSVQSAVPVVGPSVTCQSRRLYVGNIPFGCNEEAMLDFFNQQMHLCNLAQAPGNPILLCQINLDKNFAFIEFRSIDETTAGMAFDGINFMGQQLKVRRPRDYQPSQNTFDMNARMPVSSIVVDSANKIFIGGLPNYLTEDQVKELLCSFGPLKAFSLNVDSQGNSKGYAFAEYLDPTLTDQAIAGLNGMQLGDKQLVVQLACANQTRHNTHLPNSASAIAGIDLSQGAGRATEILCLMNMVTEDELRSDEDYEEILEDVREECSKYGIVRSLEIPRPYDDHPVPGVGKVFVEFATTSDCQRAQAALTGRKFANRTVVTSYYDVDKYHNRQFN.

Composition is skewed to basic and acidic residues over residues 25–55 (LESLQEDVKPDVKSDLNGNGEEKRDRDDEDR) and 78–129 (DRRD…KYRF). A disordered region spans residues 25–133 (LESLQEDVKP…PKKYRFWDVP (109 aa)). RRM domains lie at 175 to 257 (RRLY…RPRD), 282 to 359 (NKIF…LACA), and 389 to 479 (EILC…YYDV).

The protein belongs to the splicing factor SR family. As to quaternary structure, forms a heterodimer with the U2AF small subunit.

It localises to the nucleus. Its function is as follows. Necessary for the splicing of pre-mRNA. Binds to the polypyrimidine tract of introns early during spliceosome assembly. The sequence is that of Splicing factor U2AF 65 kDa subunit (uaf-1) from Caenorhabditis briggsae.